A 441-amino-acid chain; its full sequence is Major capsid protein (441 aa).

Residues M1 to E51 constitute a propeptide that is removed on maturation.

The protein localises to the virion. The polypeptide is Major capsid protein (Serratia marcescens (Serratia marcescens bacteriophage KSP90)).